Here is a 616-residue protein sequence, read N- to C-terminus: Dihydroxy-acid dehydratase (616 aa).

Asp81 serves as a coordination point for Mg(2+). Cys122 is a binding site for [2Fe-2S] cluster. The Mg(2+) site is built by Asp123 and Lys124. N6-carboxylysine is present on Lys124. A [2Fe-2S] cluster-binding site is contributed by Cys195. Glu491 is a Mg(2+) binding site. The active-site Proton acceptor is Ser517.

The protein belongs to the IlvD/Edd family. Homodimer. [2Fe-2S] cluster serves as cofactor. Requires Mg(2+) as cofactor.

It catalyses the reaction (2R)-2,3-dihydroxy-3-methylbutanoate = 3-methyl-2-oxobutanoate + H2O. It carries out the reaction (2R,3R)-2,3-dihydroxy-3-methylpentanoate = (S)-3-methyl-2-oxopentanoate + H2O. It functions in the pathway amino-acid biosynthesis; L-isoleucine biosynthesis; L-isoleucine from 2-oxobutanoate: step 3/4. Its pathway is amino-acid biosynthesis; L-valine biosynthesis; L-valine from pyruvate: step 3/4. In terms of biological role, functions in the biosynthesis of branched-chain amino acids. Catalyzes the dehydration of (2R,3R)-2,3-dihydroxy-3-methylpentanoate (2,3-dihydroxy-3-methylvalerate) into 2-oxo-3-methylpentanoate (2-oxo-3-methylvalerate) and of (2R)-2,3-dihydroxy-3-methylbutanoate (2,3-dihydroxyisovalerate) into 2-oxo-3-methylbutanoate (2-oxoisovalerate), the penultimate precursor to L-isoleucine and L-valine, respectively. The chain is Dihydroxy-acid dehydratase from Escherichia coli O8 (strain IAI1).